Consider the following 36-residue polypeptide: Delta-amaurobitoxin-Pl1c (36 aa).

Intrachain disulfides connect Cys3–Cys19, Cys10–Cys24, Cys18–Cys34, and Cys26–Cys32.

In terms of tissue distribution, expressed by the venom gland.

The protein localises to the secreted. Its function is as follows. Binds at site 4 of sodium channels (Nav) and inhibits the fast inactivation of cockroach channels. This toxin is active only on insects. Has a potent activity against S.litura larvae. The protein is Delta-amaurobitoxin-Pl1c of Pireneitega luctuosa (Tangled nest spider).